The primary structure comprises 1778 residues: Protein TIC 214 (1778 aa).

Transmembrane regions (helical) follow at residues 18 to 38 (IINS…FSIG), 67 to 87 (FIAG…HLAL), 90 to 110 (PHTI…WNNN), 132 to 152 (VFLN…SSML), 175 to 195 (VGWL…LVWI), and 226 to 246 (IFSI…PSPI). A disordered region spans residues 1498–1520 (GQGELESDNEKKRNPESALSNQE).

It belongs to the TIC214 family. In terms of assembly, part of the Tic complex.

It is found in the plastid. The protein localises to the chloroplast inner membrane. Functionally, involved in protein precursor import into chloroplasts. May be part of an intermediate translocation complex acting as a protein-conducting channel at the inner envelope. The chain is Protein TIC 214 from Arabis hirsuta (Hairy rock-cress).